The sequence spans 147 residues: Arginine repressor (147 aa).

It belongs to the ArgR family.

The protein resides in the cytoplasm. It functions in the pathway amino-acid biosynthesis; L-arginine biosynthesis [regulation]. In terms of biological role, regulates arginine biosynthesis genes. The protein is Arginine repressor of Chlamydia caviae (strain ATCC VR-813 / DSM 19441 / 03DC25 / GPIC) (Chlamydophila caviae).